A 341-amino-acid polypeptide reads, in one-letter code: Elongation factor Ts (341 aa).

Positions 80–83 (TDFV) are involved in Mg(2+) ion dislocation from EF-Tu.

Belongs to the EF-Ts family.

It is found in the cytoplasm. Its function is as follows. Associates with the EF-Tu.GDP complex and induces the exchange of GDP to GTP. It remains bound to the aminoacyl-tRNA.EF-Tu.GTP complex up to the GTP hydrolysis stage on the ribosome. This is Elongation factor Ts from Lactobacillus helveticus (strain DPC 4571).